Consider the following 441-residue polypeptide: Tubulin alpha chain (441 aa).

GTP contacts are provided by Gln11, Glu68, Ser137, Gly141, Thr142, Thr176, Asn203, and Asn224. A Mg(2+)-binding site is contributed by Glu68. Residue Glu250 is part of the active site.

The protein belongs to the tubulin family. As to quaternary structure, dimer of alpha and beta chains. A typical microtubule is a hollow water-filled tube with an outer diameter of 25 nm and an inner diameter of 15 nM. Alpha-beta heterodimers associate head-to-tail to form protofilaments running lengthwise along the microtubule wall with the beta-tubulin subunit facing the microtubule plus end conferring a structural polarity. Microtubules usually have 13 protofilaments but different protofilament numbers can be found in some organisms and specialized cells. Mg(2+) serves as cofactor.

The protein resides in the cytoplasm. It is found in the cytoskeleton. It carries out the reaction GTP + H2O = GDP + phosphate + H(+). Its function is as follows. Tubulin is the major constituent of microtubules, a cylinder consisting of laterally associated linear protofilaments composed of alpha- and beta-tubulin heterodimers. Microtubules grow by the addition of GTP-tubulin dimers to the microtubule end, where a stabilizing cap forms. Below the cap, tubulin dimers are in GDP-bound state, owing to GTPase activity of alpha-tubulin. This Encephalitozoon cuniculi (strain GB-M1) (Microsporidian parasite) protein is Tubulin alpha chain (TUB1).